The primary structure comprises 162 residues: N5-carboxyaminoimidazole ribonucleotide mutase (162 aa).

Substrate is bound by residues serine 11, aspartate 14, and arginine 41.

The protein belongs to the AIR carboxylase family. Class I subfamily.

It catalyses the reaction 5-carboxyamino-1-(5-phospho-D-ribosyl)imidazole + H(+) = 5-amino-1-(5-phospho-D-ribosyl)imidazole-4-carboxylate. The protein operates within purine metabolism; IMP biosynthesis via de novo pathway; 5-amino-1-(5-phospho-D-ribosyl)imidazole-4-carboxylate from 5-amino-1-(5-phospho-D-ribosyl)imidazole (N5-CAIR route): step 2/2. In terms of biological role, catalyzes the conversion of N5-carboxyaminoimidazole ribonucleotide (N5-CAIR) to 4-carboxy-5-aminoimidazole ribonucleotide (CAIR). This chain is N5-carboxyaminoimidazole ribonucleotide mutase, found in Brucella melitensis biotype 1 (strain ATCC 23456 / CCUG 17765 / NCTC 10094 / 16M).